Here is a 647-residue protein sequence, read N- to C-terminus: CRE-binding bZIP protein SKO1 (647 aa).

Disordered stretches follow at residues 1–119 (MSSE…GSKR), 135–204 (STTN…QMPG), 305–331 (TPTT…TSTK), and 353–429 (KENE…EEQE). A compositionally biased stretch (polar residues) spans 51–85 (RNNSTSTITQHSQRSTHSLNSIPEENGNSTVTDNS). A Phosphoserine modification is found at Ser-94. The residue at position 113 (Thr-113) is a Phosphothreonine. Composition is skewed to low complexity over residues 138 to 194 (NPSQ…SGNG) and 305 to 329 (TPTT…PNTS). 2 stretches are compositionally biased toward polar residues: residues 357–368 (NLTTQIENNDQF) and 396–405 (RKNSAVTTAP). Residue Ser-399 is modified to Phosphoserine. Residues 429–492 (ERKRKEFLER…PSSSSNSQFN (64 aa)) enclose the bZIP domain. The tract at residues 430–451 (RKRKEFLERNRVAASKFRKRKK) is basic motif. Residues 454-461 (IKKIENDL) are leucine-zipper. Ser-558 carries the post-translational modification Phosphoserine.

This sequence belongs to the bZIP family.

The protein localises to the nucleus. Its function is as follows. Binds to the CRE motif 5'-TGACGTCA-3' and acts as a repressor of transcription of the SUC2 gene and most probably other genes. This Saccharomyces cerevisiae (strain ATCC 204508 / S288c) (Baker's yeast) protein is CRE-binding bZIP protein SKO1 (SKO1).